A 615-amino-acid polypeptide reads, in one-letter code: Granule-bound starch synthase 1, chloroplastic/amyloplastic (615 aa).

The N-terminal 70 residues, 1 to 70 (MAALVTSQLA…DRRCLSMVVR (70 aa)), are a transit peptide targeting the chloroplast. Lys-91 is an ADP-alpha-D-glucose binding site.

Belongs to the glycosyltransferase 1 family. Bacterial/plant glycogen synthase subfamily. As to expression, found in seeds and pollen.

It is found in the plastid. The protein resides in the chloroplast. Its subcellular location is the amyloplast. The catalysed reaction is an NDP-alpha-D-glucose + [(1-&gt;4)-alpha-D-glucosyl](n) = [(1-&gt;4)-alpha-D-glucosyl](n+1) + a ribonucleoside 5'-diphosphate + H(+). It participates in glycan biosynthesis; starch biosynthesis. The chain is Granule-bound starch synthase 1, chloroplastic/amyloplastic (WAXY) from Triticum aestivum (Wheat).